Here is a 501-residue protein sequence, read N- to C-terminus: Glutamyl-tRNA(Gln) amidotransferase subunit A (501 aa).

Catalysis depends on charge relay system residues K80 and S155. S179 serves as the catalytic Acyl-ester intermediate.

This sequence belongs to the amidase family. GatA subfamily. As to quaternary structure, heterotrimer of A, B and C subunits.

It carries out the reaction L-glutamyl-tRNA(Gln) + L-glutamine + ATP + H2O = L-glutaminyl-tRNA(Gln) + L-glutamate + ADP + phosphate + H(+). Its function is as follows. Allows the formation of correctly charged Gln-tRNA(Gln) through the transamidation of misacylated Glu-tRNA(Gln) in organisms which lack glutaminyl-tRNA synthetase. The reaction takes place in the presence of glutamine and ATP through an activated gamma-phospho-Glu-tRNA(Gln). This is Glutamyl-tRNA(Gln) amidotransferase subunit A from Cupriavidus necator (strain ATCC 17699 / DSM 428 / KCTC 22496 / NCIMB 10442 / H16 / Stanier 337) (Ralstonia eutropha).